The chain runs to 315 residues: Prephenate dehydratase (315 aa).

Residues 3–189 enclose the Prephenate dehydratase domain; the sequence is RIAYLGPEGT…ARTRFVLVGP (187 aa). Positions 203–280 constitute an ACT domain; that stretch reads SVVLRIDNAP…ADVRYLGSWP (78 aa).

In terms of assembly, homodimer.

The enzyme catalyses prephenate + H(+) = 3-phenylpyruvate + CO2 + H2O. Its pathway is amino-acid biosynthesis; L-phenylalanine biosynthesis; phenylpyruvate from prephenate: step 1/1. This Mycobacterium avium (strain 104) protein is Prephenate dehydratase (pheA).